The chain runs to 274 residues: Putative bidirectional sugar transporter SWEET7d (274 aa).

Over 1-8 (MVPDLIRN) the chain is Extracellular. A helical transmembrane segment spans residues 9–29 (VVGIVGNVISFGLFLSPVPTF). Residues 9 to 96 (VVGIVGNVIS…TIFFLFSDKK (88 aa)) enclose the MtN3/slv 1 domain. At 30 to 45 (WRIIKNKDVRDFKADQ) the chain is on the cytoplasmic side. Residues 46 to 66 (YLATLLNCMLWVFYGLPIVHP) traverse the membrane as a helical segment. Residues 67–68 (NS) are Extracellular-facing. The chain crosses the membrane as a helical span at residues 69-89 (ILVVTINGIGLVIEAVYLTIF). Over 90–100 (FLFSDKKNKKK) the chain is Cytoplasmic. Residues 101–121 (MGVVLATEALFMAAVALGVLL) form a helical membrane-spanning segment. Over 122 to 130 (DAHTHQRRS) the chain is Extracellular. Residues 131–151 (LIVGILCVIFGTIMYSSPLTI) traverse the membrane as a helical segment. Residues 132 to 214 (IVGILCVIFG…QLILYAIYYR (83 aa)) enclose the MtN3/slv 2 domain. The Cytoplasmic portion of the chain corresponds to 152-164 (MSQVVKTKSVEYM). A helical transmembrane segment spans residues 165-185 (PLLLSVVSFLNGLCWTSYALI). Topologically, residues 186–188 (RFD) are extracellular. A helical transmembrane segment spans residues 189-209 (IFITIPNGLGVLFALMQLILY). Residues 210 to 274 (AIYYRTTPKK…SISRLSHKLA (65 aa)) are Cytoplasmic-facing. Residues 218–274 (KKPSTTGPHPRSRIRTSSYQPSPPSPRAPASSPLSARTTTSMAAMSPSISRLSHKLA) form a disordered region. Residues 245–258 (APASSPLSARTTTS) show a composition bias toward low complexity.

It belongs to the SWEET sugar transporter family. In terms of assembly, forms homooligomers and/or heterooligomers.

Its subcellular location is the cell membrane. Its function is as follows. Mediates both low-affinity uptake and efflux of sugar across the plasma membrane. In Oryza sativa subsp. japonica (Rice), this protein is Putative bidirectional sugar transporter SWEET7d (SWEET7D).